The chain runs to 292 residues: 4-hydroxy-tetrahydrodipicolinate synthase (292 aa).

Position 45 (Thr-45) interacts with pyruvate. Tyr-133 functions as the Proton donor/acceptor in the catalytic mechanism. The active-site Schiff-base intermediate with substrate is the Lys-161. Pyruvate is bound at residue Ile-203.

Belongs to the DapA family. As to quaternary structure, homotetramer; dimer of dimers.

The protein resides in the cytoplasm. The enzyme catalyses L-aspartate 4-semialdehyde + pyruvate = (2S,4S)-4-hydroxy-2,3,4,5-tetrahydrodipicolinate + H2O + H(+). It participates in amino-acid biosynthesis; L-lysine biosynthesis via DAP pathway; (S)-tetrahydrodipicolinate from L-aspartate: step 3/4. In terms of biological role, catalyzes the condensation of (S)-aspartate-beta-semialdehyde [(S)-ASA] and pyruvate to 4-hydroxy-tetrahydrodipicolinate (HTPA). This Dechloromonas aromatica (strain RCB) protein is 4-hydroxy-tetrahydrodipicolinate synthase.